Reading from the N-terminus, the 310-residue chain is Carbamate kinase 1 (310 aa).

In terms of assembly, homodimer (predominantly) and homotetramer.

Its subcellular location is the cytoplasm. It carries out the reaction hydrogencarbonate + NH4(+) + ATP = carbamoyl phosphate + ADP + H2O + H(+). Its pathway is metabolic intermediate metabolism; carbamoyl phosphate degradation; CO(2) and NH(3) from carbamoyl phosphate: step 1/1. With respect to regulation, inhibited by adenosine(5')pentaphospho(5')adenosine (Ap5A), Ap6A and to a much lower extent by Ap4A. Catalyzes the reversible synthesis of carbamate and ATP from carbamoyl phosphate and ADP. Can also catalyze, although with low efficiency, the phosphorylation of bicarbonate, leading to the formation of carboxyphosphate, an unstable intermediate found in the reactions catalyzed by carbamoyl-phosphate synthase and biotin carboxylase. Can also use acetate. This is Carbamate kinase 1 (arcC1) from Enterococcus faecium (Streptococcus faecium).